A 391-amino-acid polypeptide reads, in one-letter code: DNA-directed RNA polymerase subunit Rpo1C (391 aa).

It belongs to the RNA polymerase beta' chain family. Part of the RNA polymerase complex.

The protein resides in the cytoplasm. Its subcellular location is the chromosome. It carries out the reaction RNA(n) + a ribonucleoside 5'-triphosphate = RNA(n+1) + diphosphate. Functionally, DNA-dependent RNA polymerase (RNAP) catalyzes the transcription of DNA into RNA using the four ribonucleoside triphosphates as substrates. Forms part of the jaw domain. The polypeptide is DNA-directed RNA polymerase subunit Rpo1C (Thermococcus kodakarensis (strain ATCC BAA-918 / JCM 12380 / KOD1) (Pyrococcus kodakaraensis (strain KOD1))).